Reading from the N-terminus, the 307-residue chain is N-acetylmuramic acid 6-phosphate etherase (307 aa).

The region spanning 59-222 is the SIS domain; the sequence is TADRLRQGGR…STGVMVKLGK (164 aa). The active-site Proton donor is glutamate 87. The active site involves glutamate 118.

It belongs to the GCKR-like family. MurNAc-6-P etherase subfamily. In terms of assembly, homodimer.

The catalysed reaction is N-acetyl-D-muramate 6-phosphate + H2O = N-acetyl-D-glucosamine 6-phosphate + (R)-lactate. Its pathway is amino-sugar metabolism; N-acetylmuramate degradation. In terms of biological role, specifically catalyzes the cleavage of the D-lactyl ether substituent of MurNAc 6-phosphate, producing GlcNAc 6-phosphate and D-lactate. The sequence is that of N-acetylmuramic acid 6-phosphate etherase from Trichormus variabilis (strain ATCC 29413 / PCC 7937) (Anabaena variabilis).